Here is a 380-residue protein sequence, read N- to C-terminus: Cytochrome b (380 aa).

4 consecutive transmembrane segments (helical) span residues 34–54 (FGSLLGMCLILQITTGIFLAM), 78–99 (WLLRGLHANGASIFFICLYFHI), 114–134 (WYTGIMLLFLTMATAFMGYIL), and 179–199 (FFTLHFLTPFIISSLTTIHLL). Heme b is bound by residues His84 and His98. Residues His183 and His197 each contribute to the heme b site. His202 contacts a ubiquinone. A run of 4 helical transmembrane segments spans residues 227–247 (YKDLLGVNLLMIGLLTLTLFL), 289–309 (LGGVLALLSSVTILFIMPTLH), 321–341 (FTQILFWSPTADLVILTWIGA), and 348–368 (FIMIGQTASVFYFTLILLLIP).

Belongs to the cytochrome b family. In terms of assembly, the cytochrome bc1 complex contains 3 respiratory subunits (MT-CYB, CYC1 and UQCRFS1), 2 core proteins (UQCRC1 and UQCRC2) and probably 6 low-molecular weight proteins. It depends on heme b as a cofactor.

The protein resides in the mitochondrion inner membrane. Functionally, component of the ubiquinol-cytochrome c reductase complex (complex III or cytochrome b-c1 complex) that is part of the mitochondrial respiratory chain. The b-c1 complex mediates electron transfer from ubiquinol to cytochrome c. Contributes to the generation of a proton gradient across the mitochondrial membrane that is then used for ATP synthesis. This is Cytochrome b (MT-CYB) from Pelomedusa subrufa (African side-necked turtle).